The following is a 252-amino-acid chain: Hydroxyacylglutathione hydrolase (252 aa).

Residues His54, His56, Asp58, His59, His113, Asp132, and His170 each coordinate Zn(2+).

It belongs to the metallo-beta-lactamase superfamily. Glyoxalase II family. Monomer. Zn(2+) serves as cofactor.

It catalyses the reaction an S-(2-hydroxyacyl)glutathione + H2O = a 2-hydroxy carboxylate + glutathione + H(+). It functions in the pathway secondary metabolite metabolism; methylglyoxal degradation; (R)-lactate from methylglyoxal: step 2/2. Functionally, thiolesterase that catalyzes the hydrolysis of S-D-lactoyl-glutathione to form glutathione and D-lactic acid. The polypeptide is Hydroxyacylglutathione hydrolase (Gloeobacter violaceus (strain ATCC 29082 / PCC 7421)).